The sequence spans 124 residues: MARLAGVDIPREKRLEIALTYIYGVGKTRAHETLAATGISADVRVKDLTDAQLVELRDYIEGNYKVEGDLRREVAADIRRKVEIGSYEGLRHRKGLPVRGQRTKTNARTRKGPKRTVAGKKKAR.

Positions 94 to 124 are disordered; the sequence is KGLPVRGQRTKTNARTRKGPKRTVAGKKKAR.

It belongs to the universal ribosomal protein uS13 family. In terms of assembly, part of the 30S ribosomal subunit. Forms a loose heterodimer with protein S19. Forms two bridges to the 50S subunit in the 70S ribosome.

In terms of biological role, located at the top of the head of the 30S subunit, it contacts several helices of the 16S rRNA. In the 70S ribosome it contacts the 23S rRNA (bridge B1a) and protein L5 of the 50S subunit (bridge B1b), connecting the 2 subunits; these bridges are implicated in subunit movement. Contacts the tRNAs in the A and P-sites. This Pseudarthrobacter chlorophenolicus (strain ATCC 700700 / DSM 12829 / CIP 107037 / JCM 12360 / KCTC 9906 / NCIMB 13794 / A6) (Arthrobacter chlorophenolicus) protein is Small ribosomal subunit protein uS13.